We begin with the raw amino-acid sequence, 424 residues long: Probable methyltransferase EP424R (424 aa).

Positions 103 to 315 (QIVTNAWLKM…TYIVGKNRLR (213 aa)) constitute an Adrift-type SAM-dependent 2'-O-MTase domain. Residues Gly135 and Asp228 each contribute to the S-adenosyl-L-methionine site. The active-site Proton acceptor is the Lys268.

It localises to the virion. This is Probable methyltransferase EP424R from Ornithodoros (relapsing fever ticks).